Consider the following 252-residue polypeptide: 3-dehydroquinate dehydratase (252 aa).

Residues serine 21, 46–48 (EWR), and arginine 82 each bind 3-dehydroquinate. The Proton donor/acceptor role is filled by histidine 143. Lysine 170 (schiff-base intermediate with substrate) is an active-site residue. 3-dehydroquinate-binding residues include arginine 213, serine 232, and glutamine 236.

The protein belongs to the type-I 3-dehydroquinase family. As to quaternary structure, homodimer.

It catalyses the reaction 3-dehydroquinate = 3-dehydroshikimate + H2O. The protein operates within metabolic intermediate biosynthesis; chorismate biosynthesis; chorismate from D-erythrose 4-phosphate and phosphoenolpyruvate: step 3/7. In terms of biological role, involved in the third step of the chorismate pathway, which leads to the biosynthesis of aromatic amino acids. Catalyzes the cis-dehydration of 3-dehydroquinate (DHQ) and introduces the first double bond of the aromatic ring to yield 3-dehydroshikimate. The chain is 3-dehydroquinate dehydratase from Escherichia coli O6:K15:H31 (strain 536 / UPEC).